The chain runs to 393 residues: Polygalacturonase (393 aa).

Residues 1 to 23 (MANRRSLFSLSLIFVFMINSAIA) form the signal peptide. 6 PbH1 repeats span residues 115-136 (VNGV…WACK), 178-204 (FQNV…HVQM), 205-226 (SSGV…SIGP), 228-248 (TSNL…SIGS), 258-279 (VQNV…RIKS), and 288-309 (ARNI…VIDQ). The active-site Proton donor is aspartate 219. A disulfide bridge connects residues cysteine 221 and cysteine 238. The active site involves histidine 242. N-linked (GlcNAc...) asparagine glycosylation occurs at asparagine 260. 2 disulfides stabilise this stretch: cysteine 349–cysteine 355 and cysteine 376–cysteine 392.

It belongs to the glycosyl hydrolase 28 family.

It localises to the secreted. Its subcellular location is the cell wall. The catalysed reaction is (1,4-alpha-D-galacturonosyl)n+m + H2O = (1,4-alpha-D-galacturonosyl)n + (1,4-alpha-D-galacturonosyl)m.. Acts in concert with the pectinesterase, in the ripening process. Is involved in cell wall metabolism, specifically in polyuronide degradation. This is Polygalacturonase from Prunus persica (Peach).